The sequence spans 841 residues: MAP7 domain-containing protein 1 (841 aa).

Disordered regions lie at residues M1–K151 and E184–K208. Positions P22–P52 are enriched in pro residues. 2 positions are modified to phosphothreonine: T47 and T51. Residues S70, S86, and S93 each carry the phosphoserine modification. T97 carries the phosphothreonine modification. Phosphoserine occurs at positions 113 and 116. Residue T118 is modified to Phosphothreonine. 2 positions are modified to phosphoserine: S123 and S125. A coiled-coil region spans residues T128 to T222. Positions Q130–K151 are enriched in basic and acidic residues. S254, S273, S313, S366, and S399 each carry phosphoserine. Positions T316–T813 are disordered. A compositionally biased stretch (polar residues) spans A365–R377. Residues R405–R435 are compositionally biased toward basic and acidic residues. A coiled-coil region spans residues V412–Q441. S442, S446, S452, S454, and S460 each carry phosphoserine. Residues S460–S473 show a composition bias toward low complexity. A Glycyl lysine isopeptide (Lys-Gly) (interchain with G-Cter in SUMO2) cross-link involves residue K462. 2 positions are modified to phosphoserine: S479 and S496. The segment covering S479–P497 has biased composition (pro residues). The segment covering P523–S539 has biased composition (basic and acidic residues). Phosphoserine occurs at positions 544, 548, and 552. A compositionally biased stretch (pro residues) spans S544–E561. At T554 the chain carries Phosphothreonine. Over residues Q562–S576 the composition is skewed to low complexity. Positions P577–P586 are enriched in pro residues. Residues T593–K721 adopt a coiled-coil conformation. Residues T594–E735 are compositionally biased toward basic and acidic residues. S742 and S753 each carry phosphoserine. Residues T813 and T816 each carry the phosphothreonine modification. S834 is modified (phosphoserine).

The protein belongs to the MAP7 family.

It localises to the cytoplasm. The protein resides in the cytoskeleton. Its subcellular location is the spindle. The protein localises to the microtubule organizing center. It is found in the centrosome. It localises to the midbody. In terms of biological role, microtubule-stabilizing protein involved in the control of cell motility and neurite outgrowth. Facilitate microtubule stabilization through the maintenance of acetylated stable microtubules. This Homo sapiens (Human) protein is MAP7 domain-containing protein 1 (MAP7D1).